Consider the following 307-residue polypeptide: MGSLKPWARYLLLLMAHLLAMGLGAVVLQALEGPPARHLQAQVQAELASFQAEHRACLPPEALEELLGAVLRAQAHGVSSLGNSSETSNWDLPSALLFTASILTTTGYGHMAPLSSGGKAFCVVYAALGLPASLALVAALRHCLLPVFSRPGDWVAIRWQLAPAQAALLQAAGLGLLVACVFMLLPALVLWGVQGDCSLLEAIYFCFGSLSTIGLGDLLPAHGRGLHPAIYHLGQFALLGYLLLGLLAMLLAVETFSELPQVRAMVKFFGPSGSRTDEDQDGILGQDELALSTVLPDAPVLGPTTPA.

The Cytoplasmic portion of the chain corresponds to 1–10; the sequence is MGSLKPWARY. Residues 11–31 traverse the membrane as a helical segment; it reads LLLLMAHLLAMGLGAVVLQAL. The N-linked (GlcNAc...) asparagine glycan is linked to asparagine 83. The segment at residues 92–118 is an intramembrane region (pore-forming); it reads LPSALLFTASILTTTGYGHMAPLSSGG. The helical transmembrane segment at 120–140 threads the bilayer; sequence AFCVVYAALGLPASLALVAAL. Residues 141 to 172 are Cytoplasmic-facing; the sequence is RHCLLPVFSRPGDWVAIRWQLAPAQAALLQAA. The chain crosses the membrane as a helical span at residues 173–193; the sequence is GLGLLVACVFMLLPALVLWGV. The segment at residues 199–227 is an intramembrane region (pore-forming); that stretch reads LLEAIYFCFGSLSTIGLGDLLPAHGRGLH. A helical membrane pass occupies residues 233-253; the sequence is LGQFALLGYLLLGLLAMLLAV. The Cytoplasmic portion of the chain corresponds to 254 to 307; the sequence is ETFSELPQVRAMVKFFGPSGSRTDEDQDGILGQDELALSTVLPDAPVLGPTTPA.

This sequence belongs to the two pore domain potassium channel (TC 1.A.1.8) family. Homodimer. In terms of tissue distribution, detected in embryo, eye, lung and liver. Weakly expressed in colon, testis, atria, kidney, intestine, bladder, uterus, ovary, salivary gland, thymus and brain stem. Not detected in brain, cerebellum, spinal cord, heart, ventricle, skeletal muscle, liver, placenta and pancreas. In the eye, highly expressed in the retinal ganglion cell layer and inner nuclear layer.

The protein resides in the membrane. In terms of biological role, probable potassium channel subunit. No channel activity observed in vitro as protein remains in the endoplasmic reticulum. May need to associate with an as yet unknown partner in order to reach the plasma membrane. This chain is Potassium channel subfamily K member 7 (Kcnk7), found in Mus musculus (Mouse).